Here is a 226-residue protein sequence, read N- to C-terminus: Glutathione peroxidase 3 (226 aa).

The signal sequence occupies residues 1–24 (MARILRASCLLSLLLAGFVPPGRG). Selenocysteine 73 is an active-site residue. Residue selenocysteine 73 is a non-standard amino acid, selenocysteine.

Belongs to the glutathione peroxidase family. Homotetramer. In terms of tissue distribution, secreted in plasma.

The protein resides in the secreted. The enzyme catalyses 2 glutathione + H2O2 = glutathione disulfide + 2 H2O. The catalysed reaction is tert-butyl hydroperoxide + 2 glutathione = tert-butanol + glutathione disulfide + H2O. Functionally, protects cells and enzymes from oxidative damage, by catalyzing the reduction of hydrogen peroxide, lipid peroxides and organic hydroperoxide, by glutathione. This chain is Glutathione peroxidase 3, found in Mus musculus (Mouse).